Here is a 195-residue protein sequence, read N- to C-terminus: Imidazoleglycerol-phosphate dehydratase (195 aa).

The protein belongs to the imidazoleglycerol-phosphate dehydratase family.

It localises to the cytoplasm. The enzyme catalyses D-erythro-1-(imidazol-4-yl)glycerol 3-phosphate = 3-(imidazol-4-yl)-2-oxopropyl phosphate + H2O. Its pathway is amino-acid biosynthesis; L-histidine biosynthesis; L-histidine from 5-phospho-alpha-D-ribose 1-diphosphate: step 6/9. The polypeptide is Imidazoleglycerol-phosphate dehydratase (Cupriavidus metallidurans (strain ATCC 43123 / DSM 2839 / NBRC 102507 / CH34) (Ralstonia metallidurans)).